A 212-amino-acid chain; its full sequence is Golgi SNAP receptor complex member 2 (212 aa).

At Met-1 the chain carries N-acetylmethionine. Topologically, residues Met-1–Lys-190 are cytoplasmic. Positions Leu-60 to Gln-92 form a coiled coil. An IxM motif; signal for cargo packaging into COPII-coated vesicles motif is present at residues Ile-118–Met-120. Residues Tyr-191–Leu-211 form a helical; Anchor for type IV membrane protein membrane-spanning segment. Residue Thr-212 is a topological domain, vesicular.

This sequence belongs to the GOSR2 family. In terms of assembly, part of a unique SNARE complex composed of the Golgi SNAREs GOSR1, STX5 and YKT6. Interacts with BET1.

It is found in the golgi apparatus. The protein resides in the cis-Golgi network membrane. Its subcellular location is the golgi apparatus membrane. The protein localises to the endoplasmic reticulum membrane. In terms of biological role, involved in transport of proteins from the cis/medial-Golgi to the trans-Golgi network. The sequence is that of Golgi SNAP receptor complex member 2 (Gosr2) from Mus musculus (Mouse).